Here is a 473-residue protein sequence, read N- to C-terminus: Photosystem II CP43 reaction center protein (473 aa).

The propeptide occupies 1-14 (MKILYSQRRFYHVE). The next 5 membrane-spanning stretches (helical) occupy residues 69–93 (LFEV…PHLA), 134–155 (LIGP…RDKN), 178–200 (KAMF…RYIN), 255–275 (KPFG…LSYS), and 291–312 (WYNN…ASQA). Glu-367 provides a ligand contact to [CaMn4O5] cluster. A helical transmembrane segment spans residues 447 to 471 (RARAAAAGFEKGINRENEPVLSMKL).

The protein belongs to the PsbB/PsbC family. PsbC subfamily. PSII is composed of 1 copy each of membrane proteins PsbA, PsbB, PsbC, PsbD, PsbE, PsbF, PsbH, PsbI, PsbJ, PsbK, PsbL, PsbM, PsbT, PsbY, PsbZ, Psb30/Ycf12, at least 3 peripheral proteins of the oxygen-evolving complex and a large number of cofactors. It forms dimeric complexes. It depends on Binds multiple chlorophylls and provides some of the ligands for the Ca-4Mn-5O cluster of the oxygen-evolving complex. It may also provide a ligand for a Cl- that is required for oxygen evolution. PSII binds additional chlorophylls, carotenoids and specific lipids. as a cofactor.

The protein resides in the plastid. The protein localises to the chloroplast thylakoid membrane. In terms of biological role, one of the components of the core complex of photosystem II (PSII). It binds chlorophyll and helps catalyze the primary light-induced photochemical processes of PSII. PSII is a light-driven water:plastoquinone oxidoreductase, using light energy to abstract electrons from H(2)O, generating O(2) and a proton gradient subsequently used for ATP formation. The sequence is that of Photosystem II CP43 reaction center protein from Galdieria sulphuraria (Red alga).